The sequence spans 881 residues: MAKNTDIEHDAHEPAGHGDVRESAVENPSASAVSDGEERATFAPEVAPQTDTESAQGAAQESEPEVQRAGEAEKGVPEKAKAVVPLDELLPQKVHLIPLTGRPIYPGIFTPLLISDEDDVRSVESAYSDSGFIGLCLVKTDTQNPTISDLYEVGSVARIVKKINLPDGGLNVFISTQKRFRIRKHVHHSKPIVAAVQYLSDLIEGDPLEIKALVRGLIGEMKELSENNPLFSEEMRLNMINIDHPGKIADFIASILNISKEEQQRTLEILDVRKRMEEVFVYIKKEKDLLEIQRKIQNDLNSRVEKNQREYFLREELRSIKEELGLTTDPKERDQRKFRALIDSFHFEGEVKEAVESELEKLSLTDPNSPEYSVGRTYLETVLSLPWHAPEKEEYDLKKAQKLLDEDHYGLENVKERIVEYLAVRKLRADTKGSIILLVGPPGVGKTSVGKSIARAIHKPFFRFSVGGISDEAEIKGHRRTYIGALPGKVLQGLKIVKTKAPVFMIDEVDKIGSGARGDPAGALLEVLDPEQNTTFRDHYLDLPFDLSHIVFVLTANSTDPIPRPLLDRAEIIRLSGYIDTEKVEIAKRHLVPKTLEKNGLKRACVSYRKEVLLHLVHSYARESGVRGLEKSLDKLHRKLATEIVLGKRSFDDKCLMDEALIGTFLGKPVFRDDMLKDANKVGTAVGLAWTGMGGDTLLVEAITIPGKASFKLTGQMGAVMKESASIALSWLRRYSAQQRIASPNWFEKRAIHLHIPEGATPKDGPSAGITMTTTLFSLLTQQKVKPRLAMTGELSLTGQVLPIGGLKEKTIAARRGGIKEIIMPKANVRDLDEIPEHVKKGMVFHLVESMEEVLSLAFPKGKRVRAGTAAQSASPETLTG.

Positions 1-24 are enriched in basic and acidic residues; that stretch reads MAKNTDIEHDAHEPAGHGDVRESA. The interval 1-77 is disordered; that stretch reads MAKNTDIEHD…RAGEAEKGVP (77 aa). The segment covering 49-59 has biased composition (polar residues); it reads QTDTESAQGAA. Over residues 65–77 the composition is skewed to basic and acidic residues; it reads EVQRAGEAEKGVP. The Lon N-terminal domain maps to 94–287; it reads VHLIPLTGRP…EVFVYIKKEK (194 aa). 440–447 is a binding site for ATP; it reads GPPGVGKT. In terms of domain architecture, Lon proteolytic spans 679–861; it reads ANKVGTAVGL…EEVLSLAFPK (183 aa). Residues Ser767 and Lys810 contribute to the active site.

The protein belongs to the peptidase S16 family. As to quaternary structure, homohexamer. Organized in a ring with a central cavity.

The protein localises to the cytoplasm. It carries out the reaction Hydrolysis of proteins in presence of ATP.. Its function is as follows. ATP-dependent serine protease that mediates the selective degradation of mutant and abnormal proteins as well as certain short-lived regulatory proteins. Required for cellular homeostasis and for survival from DNA damage and developmental changes induced by stress. Degrades polypeptides processively to yield small peptide fragments that are 5 to 10 amino acids long. Binds to DNA in a double-stranded, site-specific manner. The chain is Lon protease from Treponema pallidum (strain Nichols).